Here is a 179-residue protein sequence, read N- to C-terminus: Large ribosomal subunit protein uL5c (179 aa).

Belongs to the universal ribosomal protein uL5 family. Part of the 50S ribosomal subunit; contacts the 5S rRNA.

Its subcellular location is the plastid. Functionally, binds 5S rRNA, forms part of the central protuberance of the 50S subunit. In Euglena longa (Euglenophycean alga), this protein is Large ribosomal subunit protein uL5c (rpl5).